The chain runs to 329 residues: Elongation factor Ts (329 aa).

Residues 79–82 (TDFV) are involved in Mg(2+) ion dislocation from EF-Tu.

Belongs to the EF-Ts family.

It localises to the cytoplasm. Functionally, associates with the EF-Tu.GDP complex and induces the exchange of GDP to GTP. It remains bound to the aminoacyl-tRNA.EF-Tu.GTP complex up to the GTP hydrolysis stage on the ribosome. This chain is Elongation factor Ts, found in Phocaeicola vulgatus (strain ATCC 8482 / DSM 1447 / JCM 5826 / CCUG 4940 / NBRC 14291 / NCTC 11154) (Bacteroides vulgatus).